The following is a 75-amino-acid chain: Protein Tlp homolog (75 aa).

The tract at residues 53-75 (REALDGMREEIKDEARDKKNGYM) is disordered.

This sequence belongs to the Tlp family.

This Clostridium botulinum (strain ATCC 19397 / Type A) protein is Protein Tlp homolog.